Here is a 557-residue protein sequence, read N- to C-terminus: Urocanate hydratase (557 aa).

NAD(+) is bound by residues 53-54 (GG), Gln131, 177-179 (GMG), Asp197, Arg202, 243-244 (NA), 264-268 (QTSAH), 274-275 (YL), and Tyr323. Residue Cys411 is part of the active site. Gly493 contacts NAD(+).

The protein belongs to the urocanase family. NAD(+) serves as cofactor.

It is found in the cytoplasm. The catalysed reaction is 4-imidazolone-5-propanoate = trans-urocanate + H2O. It functions in the pathway amino-acid degradation; L-histidine degradation into L-glutamate; N-formimidoyl-L-glutamate from L-histidine: step 2/3. Catalyzes the conversion of urocanate to 4-imidazolone-5-propionate. The polypeptide is Urocanate hydratase (Hahella chejuensis (strain KCTC 2396)).